Here is a 1122-residue protein sequence, read N- to C-terminus: Breast carcinoma-amplified sequence 3 homolog (1122 aa).

A disordered region spans residues 1–41 (MSADSPRRHPSGVVGSGIGLGSGSGTGLGSGSTGGSKSGAA). Residues 14–37 (VGSGIGLGSGSGTGLGSGSTGGSK) are compositionally biased toward gly residues. Position 55 is a phosphoserine (S55). Composition is skewed to low complexity over residues 357–377 (GTTA…ASGG), 626–641 (GSNS…SLSD), 966–987 (TKDN…PSSN), and 1036–1051 (LSLE…PLSL). Disordered stretches follow at residues 357–382 (GTTA…DAKQ), 620–644 (GVGV…DDSG), 966–990 (TKDN…NKVQ), 1033–1054 (NSRL…LTNG), and 1071–1122 (GVAQ…RRNL). At S638 the chain carries Phosphoserine. Residues 1087 to 1112 (VDDDDEEEEEEEEELDEEAEPDDDER) show a composition bias toward acidic residues. A compositionally biased stretch (basic and acidic residues) spans 1113 to 1122 (EDRPLGRRNL).

It belongs to the BCAS3 family. In terms of tissue distribution, expressed in all postembryonic pericardial cells, but not in cardioblasts. Also expressed in Garland cells in third instar larvae (at protein level).

It localises to the cytoplasm. In terms of biological role, regulates macropinocytosis in pericardial cells. In Drosophila melanogaster (Fruit fly), this protein is Breast carcinoma-amplified sequence 3 homolog (rudhira).